A 384-amino-acid chain; its full sequence is Alkanesulfonate monooxygenase (384 aa).

Belongs to the SsuD family.

It catalyses the reaction an alkanesulfonate + FMNH2 + O2 = an aldehyde + FMN + sulfite + H2O + 2 H(+). Its function is as follows. Catalyzes the desulfonation of aliphatic sulfonates. This Burkholderia thailandensis (strain ATCC 700388 / DSM 13276 / CCUG 48851 / CIP 106301 / E264) protein is Alkanesulfonate monooxygenase.